The following is a 339-amino-acid chain: Ribosomal RNA large subunit methyltransferase F (339 aa).

The disordered stretch occupies residues 1–26 (MTAPSTPKPQRKKPKTATTAKPVVPR).

It belongs to the methyltransferase superfamily. METTL16/RlmF family.

The protein resides in the cytoplasm. It catalyses the reaction adenosine(1618) in 23S rRNA + S-adenosyl-L-methionine = N(6)-methyladenosine(1618) in 23S rRNA + S-adenosyl-L-homocysteine + H(+). Functionally, specifically methylates the adenine in position 1618 of 23S rRNA. The chain is Ribosomal RNA large subunit methyltransferase F from Pseudomonas fluorescens (strain SBW25).